We begin with the raw amino-acid sequence, 239 residues long: O-methyltransferase ankF (239 aa).

Residues glutamate 71, 73-74 (GT), serine 79, glutamate 98, and alanine 127 each bind S-adenosyl-L-methionine.

It belongs to the class I-like SAM-binding methyltransferase superfamily. Cation-dependent O-methyltransferase family.

It catalyses the reaction NK13650 B + S-adenosyl-L-methionine = NK13650 D + S-adenosyl-L-homocysteine + H(+). It functions in the pathway secondary metabolite biosynthesis. O-methyltransferase; part of the ank cluster that mediates the biosynthesis of NK13650 C, a highly modified cyclo-arginine-tyrosine dipeptide. AnkF converts NK13650 B to produce NK13650 D via methylation of the C-17 phenol group. Within the pathway, the cyclodipeptide synthase ankA acts as the scaffold-generating enzyme and is responsible for formation of the cyclo-Arg-Tyr diketopiperazine (cRY) from L-Arg and L-Tyr. The ankA product cRY is desaturated by the cytochrome P450 monooxygenase ankB to yield a dehydro-cyclodipeptide intermediate. The FAD-dependent monooxygenase ankC then installs the m-OH, ankD catalyzes the attachment of L-homoserine, and ankE ligates citrate to the ankD product to yield NK13650 B. The O-methyltransferase ankF is responsible for methylation of the C-17 phenol group of NK13650 B to produce NK13650 D. Amidation of NK13650 D with L-Asp by ankG then leads to the production of NK13650 C, whereas amidation of NK13650 B produces NK13650 A. The polypeptide is O-methyltransferase ankF (Aspergillus thermomutatus (Neosartorya pseudofischeri)).